A 161-amino-acid polypeptide reads, in one-letter code: Small ribosomal subunit protein uS9 (161 aa).

It belongs to the universal ribosomal protein uS9 family.

This chain is Small ribosomal subunit protein uS9, found in Rickettsia canadensis (strain McKiel).